The primary structure comprises 342 residues: uncharacterized protein (342 aa).

This sequence belongs to the cycloisomerase 2 family.

This is an uncharacterized protein from Staphylococcus aureus (strain MSSA476).